Here is a 666-residue protein sequence, read N- to C-terminus: Endogenous retrovirus group K member 9 Gag polyprotein (666 aa).

Glycine 2 carries N-myristoyl glycine lipidation. The segment at 165-264 (GKGPELVGPS…APPSRQGSEL (100 aa)) is disordered. Pro residues predominate over residues 232–247 (GMPPAPQGRAPYPQPP). 2 consecutive CCHC-type zinc fingers follow at residues 544–561 (GKCY…NCPV) and 580–597 (DLCP…QCRS). Residues 598-641 (KFDKNGQPLSGNEQRGQPQAPQQTGAFPIQPFVPQGFQGQQPPL) form a disordered region. Over residues 604 to 622 (QPLSGNEQRGQPQAPQQTG) the composition is skewed to polar residues. Residues 624-640 (FPIQPFVPQGFQGQQPP) are compositionally biased toward low complexity.

The protein belongs to the beta type-B retroviral Gag protein family. HERV class-II K(HML-2) gag subfamily. In terms of processing, myristoylation is essential for retroviral assembly. Alteration of the glycine residue leads to a block in the budding of particles and an accumulation of Gag inside the cell. Post-translationally, specific enzymatic cleavages may yield mature proteins.

It is found in the cell membrane. Functionally, the products of the Gag polyproteins of infectious retroviruses perform highly complex orchestrated tasks during the assembly, budding, maturation, and infection stages of the viral replication cycle. During viral assembly, the proteins form membrane associations and self-associations that ultimately result in budding of an immature virion from the infected cell. Gag precursors also function during viral assembly to selectively bind and package two plus strands of genomic RNA. Endogenous Gag proteins may have kept, lost or modified their original function during evolution. This chain is Endogenous retrovirus group K member 9 Gag polyprotein (ERVK-9), found in Homo sapiens (Human).